Here is a 146-residue protein sequence, read N- to C-terminus: Catabolic 3-dehydroquinase (146 aa).

The active-site Proton acceptor is the Tyr-24. Positions 78, 84, and 91 each coordinate substrate. His-104 serves as the catalytic Proton donor. Substrate-binding positions include 105 to 106 (IT) and Arg-115.

It belongs to the type-II 3-dehydroquinase family. Homododecamer. Adopts a ring-like structure, composed of an arrangement of two hexameric rings stacked on top of one another.

The enzyme catalyses 3-dehydroquinate = 3-dehydroshikimate + H2O. It participates in aromatic compound metabolism; 3,4-dihydroxybenzoate biosynthesis; 3,4-dihydroxybenzoate from 3-dehydroquinate: step 1/2. Functionally, is involved in the catabolism of quinate. Allows the utilization of quinate as carbon source via the beta-ketoadipate pathway. The sequence is that of Catabolic 3-dehydroquinase from Candida tropicalis (strain ATCC MYA-3404 / T1) (Yeast).